The chain runs to 104 residues: Disrupted in renal carcinoma protein 1 (104 aa).

The tract at residues 1 to 23 (MPEAHMQPAKLQTSLPTTDHGSK) is disordered. Polar residues predominate over residues 10 to 19 (KLQTSLPTTD).

As to expression, expressed at low steady-state level in adult placenta, testis, ovary, prostate, fetal kidney, spleen and skeletal muscle.

This Homo sapiens (Human) protein is Disrupted in renal carcinoma protein 1 (DIRC1).